The primary structure comprises 218 residues: Glycerol-3-phosphate acyltransferase (218 aa).

Transmembrane regions (helical) follow at residues 5–25 (ALGMIIFAYLCGSISSAILIC), 53–73 (LAAASVLICDVLKGMIPVWLA), 80–100 (PFYLGIVAIAACLGHIYPVFF), 115–135 (IAAIGWDLSGLIAGTWLLTVL), and 138–158 (GYSSLGAIISALLAPFYVWWF).

Belongs to the PlsY family. In terms of assembly, probably interacts with PlsX.

The protein resides in the cell inner membrane. It carries out the reaction an acyl phosphate + sn-glycerol 3-phosphate = a 1-acyl-sn-glycero-3-phosphate + phosphate. The protein operates within lipid metabolism; phospholipid metabolism. In terms of biological role, catalyzes the transfer of an acyl group from acyl-phosphate (acyl-PO(4)) to glycerol-3-phosphate (G3P) to form lysophosphatidic acid (LPA). This enzyme utilizes acyl-phosphate as fatty acyl donor, but not acyl-CoA or acyl-ACP. The sequence is that of Glycerol-3-phosphate acyltransferase from Proteus mirabilis (strain HI4320).